Consider the following 106-residue polypeptide: MKQDIYIRIKAFDCSLLEKCIREFIDQLKQFNADLSGPIALPRKDSKFTVNRSPHVDKKSREQFEMRISKRLIIVHNPTSTMMKMLADLSFSAGVEVDLKVKEVNI.

This sequence belongs to the universal ribosomal protein uS10 family. As to quaternary structure, part of the 30S ribosomal subunit.

Its function is as follows. Involved in the binding of tRNA to the ribosomes. This is Small ribosomal subunit protein uS10 from Wolbachia pipientis subsp. Culex pipiens (strain wPip).